A 205-amino-acid polypeptide reads, in one-letter code: Arginine exporter protein ArgO (205 aa).

Helical transmembrane passes span 1–21, 42–62, 67–87, 111–131, 147–167, and 185–205; these read MLAV…PLGP, LCAL…SALL, LLLA…GWGA, ILVT…DTFV, WFAL…ALLA, and LFVG…GFGL.

This sequence belongs to the LysE/ArgO transporter (TC 2.A.75) family.

The protein localises to the cell inner membrane. It carries out the reaction L-arginine(in) = L-arginine(out). Its function is as follows. Involved in the export of arginine. Important to control the intracellular level of arginine and the correct balance between arginine and lysine. The sequence is that of Arginine exporter protein ArgO from Yersinia pseudotuberculosis serotype IB (strain PB1/+).